Reading from the N-terminus, the 254-residue chain is Receptor expression-enhancing protein 3 (254 aa).

Transmembrane regions (helical) follow at residues 1–21 (MVSW…YPAY), 35–55 (YVRW…ETVA), and 59–79 (LAWF…LLSP). Residues 162 to 232 (DEPVGHRPYQ…QSMKSVKTIK (71 aa)) form a disordered region. Residues 198 to 212 (EQTDEEAEGPFSDDE) are compositionally biased toward acidic residues. Thr200 bears the Phosphothreonine mark. Ser209 carries the post-translational modification Phosphoserine.

It belongs to the DP1 family.

It localises to the endoplasmic reticulum membrane. Microtubule-binding protein required to ensure proper cell division and nuclear envelope reassembly by sequestering the endoplasmic reticulum away from chromosomes during mitosis. Probably acts by clearing the endoplasmic reticulum membrane from metaphase chromosomes. This Mus musculus (Mouse) protein is Receptor expression-enhancing protein 3 (Reep3).